The primary structure comprises 205 residues: Thymidylate kinase (205 aa).

11-18 (GVEGAGKS) provides a ligand contact to ATP.

Belongs to the thymidylate kinase family.

It catalyses the reaction dTMP + ATP = dTDP + ADP. Functionally, phosphorylation of dTMP to form dTDP in both de novo and salvage pathways of dTTP synthesis. This is Thymidylate kinase from Vesicomyosocius okutanii subsp. Calyptogena okutanii (strain HA).